The primary structure comprises 316 residues: 4-hydroxy-3-methylbut-2-enyl diphosphate reductase (316 aa).

Cys-12 serves as a coordination point for [4Fe-4S] cluster. (2E)-4-hydroxy-3-methylbut-2-enyl diphosphate is bound by residues His-41 and His-74. Dimethylallyl diphosphate-binding residues include His-41 and His-74. Residues His-41 and His-74 each contribute to the isopentenyl diphosphate site. [4Fe-4S] cluster is bound at residue Cys-96. His-124 lines the (2E)-4-hydroxy-3-methylbut-2-enyl diphosphate pocket. His-124 contacts dimethylallyl diphosphate. His-124 lines the isopentenyl diphosphate pocket. Glu-126 acts as the Proton donor in catalysis. Thr-167 contributes to the (2E)-4-hydroxy-3-methylbut-2-enyl diphosphate binding site. [4Fe-4S] cluster is bound at residue Cys-197. Ser-225, Ser-226, Asn-227, and Ser-269 together coordinate (2E)-4-hydroxy-3-methylbut-2-enyl diphosphate. Dimethylallyl diphosphate contacts are provided by Ser-225, Ser-226, Asn-227, and Ser-269. Isopentenyl diphosphate-binding residues include Ser-225, Ser-226, Asn-227, and Ser-269.

The protein belongs to the IspH family. Homodimer. [4Fe-4S] cluster is required as a cofactor.

The catalysed reaction is isopentenyl diphosphate + 2 oxidized [2Fe-2S]-[ferredoxin] + H2O = (2E)-4-hydroxy-3-methylbut-2-enyl diphosphate + 2 reduced [2Fe-2S]-[ferredoxin] + 2 H(+). It carries out the reaction dimethylallyl diphosphate + 2 oxidized [2Fe-2S]-[ferredoxin] + H2O = (2E)-4-hydroxy-3-methylbut-2-enyl diphosphate + 2 reduced [2Fe-2S]-[ferredoxin] + 2 H(+). It functions in the pathway isoprenoid biosynthesis; dimethylallyl diphosphate biosynthesis; dimethylallyl diphosphate from (2E)-4-hydroxy-3-methylbutenyl diphosphate: step 1/1. It participates in isoprenoid biosynthesis; isopentenyl diphosphate biosynthesis via DXP pathway; isopentenyl diphosphate from 1-deoxy-D-xylulose 5-phosphate: step 6/6. Catalyzes the conversion of 1-hydroxy-2-methyl-2-(E)-butenyl 4-diphosphate (HMBPP) into a mixture of isopentenyl diphosphate (IPP) and dimethylallyl diphosphate (DMAPP). Acts in the terminal step of the DOXP/MEP pathway for isoprenoid precursor biosynthesis. This chain is 4-hydroxy-3-methylbut-2-enyl diphosphate reductase, found in Shigella flexneri serotype 5b (strain 8401).